The primary structure comprises 543 residues: Protein lin-9 homolog (543 aa).

The interval 21-82 (REGSLSNTLN…SRSPRRSQRV (62 aa)) is disordered. The segment covering 24-55 (SLSNTLNEKNNLPKSQTTRGRSSYVSMETPTR) has biased composition (polar residues). The stretch at 355–451 (IKKEHIKHLK…VLRQNNTLAS (97 aa)) forms a coiled coil.

It belongs to the lin-9 family. In terms of assembly, component of the DREAM complex.

The protein localises to the nucleus. The chain is Protein lin-9 homolog (lin9) from Danio rerio (Zebrafish).